Consider the following 96-residue polypeptide: Co-chaperonin GroES (96 aa).

This sequence belongs to the GroES chaperonin family. As to quaternary structure, heptamer of 7 subunits arranged in a ring. Interacts with the chaperonin GroEL.

It is found in the cytoplasm. Together with the chaperonin GroEL, plays an essential role in assisting protein folding. The GroEL-GroES system forms a nano-cage that allows encapsulation of the non-native substrate proteins and provides a physical environment optimized to promote and accelerate protein folding. GroES binds to the apical surface of the GroEL ring, thereby capping the opening of the GroEL channel. The chain is Co-chaperonin GroES from Acinetobacter baylyi (strain ATCC 33305 / BD413 / ADP1).